The sequence spans 416 residues: Formyl-CoA:oxalate CoA-transferase (416 aa).

CoA-binding positions include Q17 to S18, R38, L72 to K75, N96 to H98, H104, and K137 to E140. D169 (nucleophile) is an active-site residue. Substrate is bound at residue G248 to Q250. Residue Q273–Q275 participates in CoA binding.

Belongs to the CoA-transferase III family. Frc subfamily. In terms of assembly, homodimer.

The catalysed reaction is formyl-CoA + oxalate = oxalyl-CoA + formate. Its pathway is metabolic intermediate degradation; oxalate degradation; CO(2) and formate from oxalate: step 1/2. Its function is as follows. Involved in the catabolism of oxalate and in the adapatation to low pH via the induction of the oxalate-dependent acid tolerance response (ATR). Catalyzes the transfer of the CoA moiety from formyl-CoA to oxalate. The chain is Formyl-CoA:oxalate CoA-transferase from Escherichia coli (strain ATCC 8739 / DSM 1576 / NBRC 3972 / NCIMB 8545 / WDCM 00012 / Crooks).